Reading from the N-terminus, the 314-residue chain is HTH-type transcriptional regulator LeuO (314 aa).

Positions 22–79 (VDLNLLTVFDAVMQEQNITRAAHVLGMSQPAVSNAVARLKVMFNDELFVRYGRGIQPT) constitute an HTH lysR-type domain. Positions 39–58 (ITRAAHVLGMSQPAVSNAVA) form a DNA-binding region, H-T-H motif.

Belongs to the LysR transcriptional regulatory family.

Functionally, a global transcription factor. Activates transcription of the 9 following operons; yjjQ-bglJ, yjjP, acrEF, ybdO, yjcRQP, casABCDE12, rhsD-ybbC, fepE and gltF, in most cases it probably interferes with silencing by H-NS and activates transcription. Represses transcription of the 3 following operons; uxaCA, sdaCB and btsT. H-NS repression of the bgl operon, leading to the ability to metabolize some beta-glucosides. It also directly activates the bgl operon. Activation is H-NS and BglJ-RcsB independent. The polypeptide is HTH-type transcriptional regulator LeuO (leuO) (Escherichia coli (strain K12)).